The chain runs to 260 residues: Ribonuclease PH (260 aa).

Phosphate is bound by residues arginine 88 and 126–128; that span reads GTR.

It belongs to the RNase PH family. In terms of assembly, homohexameric ring arranged as a trimer of dimers.

It carries out the reaction tRNA(n+1) + phosphate = tRNA(n) + a ribonucleoside 5'-diphosphate. Functionally, phosphorolytic 3'-5' exoribonuclease that plays an important role in tRNA 3'-end maturation. Removes nucleotide residues following the 3'-CCA terminus of tRNAs; can also add nucleotides to the ends of RNA molecules by using nucleoside diphosphates as substrates, but this may not be physiologically important. Probably plays a role in initiation of 16S rRNA degradation (leading to ribosome degradation) during starvation. The chain is Ribonuclease PH from Mycolicibacterium gilvum (strain PYR-GCK) (Mycobacterium gilvum (strain PYR-GCK)).